A 405-amino-acid polypeptide reads, in one-letter code: Enoyl-[acyl-carrier-protein] reductase [NADH] (405 aa).

Residues 48–53 (GASSGY), 74–75 (FE), 111–112 (DA), and 140–141 (LA) contribute to the NAD(+) site. Substrate is bound at residue Y226. The active-site Proton donor is Y236. NAD(+)-binding positions include K245 and 274–276 (VVT).

It belongs to the TER reductase family. Monomer.

It carries out the reaction a 2,3-saturated acyl-[ACP] + NAD(+) = a (2E)-enoyl-[ACP] + NADH + H(+). It participates in lipid metabolism; fatty acid biosynthesis. Involved in the final reduction of the elongation cycle of fatty acid synthesis (FAS II). Catalyzes the reduction of a carbon-carbon double bond in an enoyl moiety that is covalently linked to an acyl carrier protein (ACP). This is Enoyl-[acyl-carrier-protein] reductase [NADH] from Xanthomonas oryzae pv. oryzae (strain PXO99A).